An 891-amino-acid chain; its full sequence is Targeting protein for Xklp2 homolog (891 aa).

Residues H42–A54 are compositionally biased toward basic and acidic residues. Disordered regions lie at residues H42–P310, N418–G454, H472–R518, C723–G746, and S789–S891. Residues D108–S124 are compositionally biased toward polar residues. Positions D141–E154 are enriched in acidic residues. A compositionally biased stretch (polar residues) spans T155 to D173. Residues P236–R246 are compositionally biased toward basic residues. The segment covering D442–G454 has biased composition (basic and acidic residues). Residues K791–N802 are compositionally biased toward polar residues. Composition is skewed to basic and acidic residues over residues T803–L822 and R831–H852.

It belongs to the TPX2 family. In terms of tissue distribution, detectable in immature oocytes.

It localises to the nucleus. Its subcellular location is the cytoplasm. The protein localises to the cytoskeleton. It is found in the spindle. Its function is as follows. Spindle assembly factor. Required for normal assembly of mitotic spindles. This Patiria pectinifera (Starfish) protein is Targeting protein for Xklp2 homolog.